The chain runs to 341 residues: HTH-type sugar sensing transcriptional regulator TrmBL1 (341 aa).

Residues 32–53 (SKATDVTKESGIPHTRIYDVLS) constitute a DNA-binding region (H-T-H motif).

The protein belongs to the transcriptional regulator TrmB family. As to quaternary structure, homotetramer. Forms homooctamers in the presence of maltotriose or maltose.

Its activity is regulated as follows. Repressor activity is regulated by binding of different sugars to TrmBL1. Binding of maltose and maltotriose results in derepression of the target genes. However, high sugar concentration results in formation of octamers with high affinity for DNA, which may prevent transcription of target genes. Its function is as follows. Global transcriptional repressor of the maltodextrin transport gene cluster (mdxE operon) and most likely of all genes encoding glycolytic enzymes. Acts by binding to the conserved TGM (Thermococcales-Glycolytic-Motif) sequences in their promoter region. Can also interact with non-TGM sequences. The protein is HTH-type sugar sensing transcriptional regulator TrmBL1 (trmBL1) of Pyrococcus furiosus (strain ATCC 43587 / DSM 3638 / JCM 8422 / Vc1).